The following is a 327-amino-acid chain: Phenylalanine--tRNA ligase alpha subunit (327 aa).

Position 252 (glutamate 252) interacts with Mg(2+).

This sequence belongs to the class-II aminoacyl-tRNA synthetase family. Phe-tRNA synthetase alpha subunit type 1 subfamily. Tetramer of two alpha and two beta subunits. It depends on Mg(2+) as a cofactor.

It is found in the cytoplasm. It carries out the reaction tRNA(Phe) + L-phenylalanine + ATP = L-phenylalanyl-tRNA(Phe) + AMP + diphosphate + H(+). In Sodalis glossinidius (strain morsitans), this protein is Phenylalanine--tRNA ligase alpha subunit.